Consider the following 131-residue polypeptide: Profilin-6 (131 aa).

A disulfide bridge connects residues Cys13 and Cys115. The Involved in PIP2 interaction signature appears at 81 to 97 (AVIRGKKGAGGITIKKT). Thr111 carries the phosphothreonine modification.

The protein belongs to the profilin family. In terms of assembly, occurs in many kinds of cells as a complex with monomeric actin in a 1:1 ratio. In terms of processing, phosphorylated by MAP kinases.

The protein resides in the cytoplasm. Its subcellular location is the cytoskeleton. Its function is as follows. Binds to actin and affects the structure of the cytoskeleton. At high concentrations, profilin prevents the polymerization of actin, whereas it enhances it at low concentrations. This chain is Profilin-6, found in Phleum pratense (Common timothy).